The chain runs to 495 residues: Aspartyl/glutamyl-tRNA(Asn/Gln) amidotransferase subunit B (495 aa).

It belongs to the GatB/GatE family. GatB subfamily. Heterotrimer of A, B and C subunits.

The catalysed reaction is L-glutamyl-tRNA(Gln) + L-glutamine + ATP + H2O = L-glutaminyl-tRNA(Gln) + L-glutamate + ADP + phosphate + H(+). The enzyme catalyses L-aspartyl-tRNA(Asn) + L-glutamine + ATP + H2O = L-asparaginyl-tRNA(Asn) + L-glutamate + ADP + phosphate + 2 H(+). Allows the formation of correctly charged Asn-tRNA(Asn) or Gln-tRNA(Gln) through the transamidation of misacylated Asp-tRNA(Asn) or Glu-tRNA(Gln) in organisms which lack either or both of asparaginyl-tRNA or glutaminyl-tRNA synthetases. The reaction takes place in the presence of glutamine and ATP through an activated phospho-Asp-tRNA(Asn) or phospho-Glu-tRNA(Gln). The chain is Aspartyl/glutamyl-tRNA(Asn/Gln) amidotransferase subunit B from Methanosarcina barkeri (strain Fusaro / DSM 804).